Reading from the N-terminus, the 401-residue chain is Probable [pyruvate dehydrogenase (acetyl-transferring)] kinase, mitochondrial (401 aa).

A Histidine kinase domain is found at 131-360 (LIELRESDGV…DACIYLKAVP (230 aa)). Residues 247-254 (ELFKNAMR), aspartate 286, 305-306 (ST), and 321-326 (GYGYGL) each bind ATP.

It belongs to the PDK/BCKDK protein kinase family.

The protein localises to the mitochondrion matrix. It carries out the reaction L-seryl-[pyruvate dehydrogenase E1 alpha subunit] + ATP = O-phospho-L-seryl-[pyruvate dehydrogenase E1 alpha subunit] + ADP + H(+). In terms of biological role, inhibits the mitochondrial pyruvate dehydrogenase complex by phosphorylation of the E1 alpha subunit, thus contributing to the regulation of glucose metabolism. Required for normal lifespan. This is Probable [pyruvate dehydrogenase (acetyl-transferring)] kinase, mitochondrial (pdhk-2) from Caenorhabditis elegans.